We begin with the raw amino-acid sequence, 345 residues long: Protein RecA (345 aa).

Residue 80-87 (GPESSGKT) participates in ATP binding.

The protein belongs to the RecA family.

The protein localises to the cytoplasm. Can catalyze the hydrolysis of ATP in the presence of single-stranded DNA, the ATP-dependent uptake of single-stranded DNA by duplex DNA, and the ATP-dependent hybridization of homologous single-stranded DNAs. It interacts with LexA causing its activation and leading to its autocatalytic cleavage. The sequence is that of Protein RecA from Mycoplasma mycoides subsp. mycoides SC (strain CCUG 32753 / NCTC 10114 / PG1).